Consider the following 458-residue polypeptide: Sugar transporter ERD6-like 10 (458 aa).

Helical transmembrane passes span 17–37, 66–86, 96–116, 119–139, 150–170, 174–194, 257–277, 292–312, 319–339, 350–370, 393–413, and 419–439; these read ITAC…SYGC, FLNL…VILG, LFCI…WLDL, ISLG…IAEI, ASTL…GTVI, VLAV…YFIP, LVVG…GITY, LGSM…LILV, PLLL…GVSF, FIPV…AIGI, IVAL…NFMF, and GTFY…WMLV.

It belongs to the major facilitator superfamily. Sugar transporter (TC 2.A.1.1) family.

Its subcellular location is the membrane. Functionally, sugar transporter. This is Sugar transporter ERD6-like 10 from Arabidopsis thaliana (Mouse-ear cress).